The primary structure comprises 110 residues: UPF0122 protein SaurJH9_1295 (110 aa).

The protein belongs to the UPF0122 family.

Functionally, might take part in the signal recognition particle (SRP) pathway. This is inferred from the conservation of its genetic proximity to ftsY/ffh. May be a regulatory protein. The chain is UPF0122 protein SaurJH9_1295 from Staphylococcus aureus (strain JH9).